A 361-amino-acid polypeptide reads, in one-letter code: MASGKLPWELEEEILCRLPPGSLVRLRSVCKHWNDLYNDKWFIKKSLGFARPQFIILAGFKIYSIGTIGLDVVDPKIEAEKWAFTRITACNGLLFRDFWNQGVTIWNPWLRQVGWIEYKEDKDFRFCGIGYDAGKPEKGYKIFGYFNRFYDTKLKIGHRFAIFECASQAFKFIDSPEWPTLAGRGEYVSLNGNLYWTAYNEDTREHFLGSFDFSTEISMHFCLLPCAKHVSGLQDKLVLTVFKGDRFALLKQSRISSNTEIWVTKDKINSSNNVVWLNLMTLSIPDFPSLFHQLSDISYFIHDMTLILCCDDNQTGVGCIFIARGDLCKKIQINYVSLGFSQCVYLPSLTSVPLEFRSLQV.

Residues M1–S46 form the F-box domain.

This Arabidopsis thaliana (Mouse-ear cress) protein is Putative F-box protein At3g18340.